A 79-amino-acid polypeptide reads, in one-letter code: Small ribosomal subunit protein bS18 (79 aa).

This sequence belongs to the bacterial ribosomal protein bS18 family. Part of the 30S ribosomal subunit. Forms a tight heterodimer with protein bS6.

Binds as a heterodimer with protein bS6 to the central domain of the 16S rRNA, where it helps stabilize the platform of the 30S subunit. The sequence is that of Small ribosomal subunit protein bS18 from Streptococcus suis (strain 98HAH33).